We begin with the raw amino-acid sequence, 832 residues long: FAST kinase domain-containing protein 1, mitochondrial (832 aa).

In terms of domain architecture, RAP spans 765–825; sequence VAIEFLDSKA…KDAWMDYLRK (61 aa).

This sequence belongs to the FAST kinase family.

The protein localises to the mitochondrion. May regulate the stability of some mitochondrial mRNA species. The chain is FAST kinase domain-containing protein 1, mitochondrial (fastkd1) from Xenopus laevis (African clawed frog).